We begin with the raw amino-acid sequence, 161 residues long: Nucleotide-binding protein PSEEN4469 (161 aa).

Belongs to the YajQ family.

Nucleotide-binding protein. This is Nucleotide-binding protein PSEEN4469 from Pseudomonas entomophila (strain L48).